The sequence spans 1020 residues: C protein alpha-antigen (1020 aa).

Residues 1–41 (MFRRSKNNSYDTSQTKQRFSIKKFKFGAASVLIGLSFLGGV) form the signal peptide. Positions 227-964 (VPDKDKYDPT…EVTVHVTPKP (738 aa)) are 9 X 82 AA tandem repeats. Disordered stretches follow at residues 261–281 (DGSK…VPGD), 306–330 (PKPV…GTPV), 342–363 (PDGS…VPGD), 388–445 (PKPV…VPGD), 470–494 (PKPV…GTPV), 506–527 (PDGS…VPGD), 552–576 (PKPV…GTPV), 588–610 (PDGS…PGDH), 634–658 (PKPV…GTPV), 670–692 (PDGS…PGDH), 716–740 (PKPV…GTPV), 752–774 (PDGS…PGDH), 798–822 (PKPV…GTPV), 834–856 (PDGS…PGDH), 880–904 (PKPV…GTPV), and 962–989 (PKPV…KLPA). The span at 272–281 (DRPDTNVPGD) shows a compositional bias: basic and acidic residues. A compositionally biased stretch (polar residues) spans 320-329 (GETTVPQGTP). Residues 354 to 363 (DRPDTNVPGD) are compositionally biased toward basic and acidic residues. Residues 402–411 (GETTVPQGTP) show a composition bias toward polar residues. The segment covering 436–445 (DRPDTNVPGD) has biased composition (basic and acidic residues). A compositionally biased stretch (polar residues) spans 484 to 493 (GETTVPQGTP). A compositionally biased stretch (basic and acidic residues) spans 518–527 (DRPDTNVPGD). Positions 566–575 (GETTVPQGTP) are enriched in polar residues. Residues 600–610 (DRPDTNVPGDH) are compositionally biased toward basic and acidic residues. Residues 648–657 (GETTVPQGTP) show a composition bias toward polar residues. A compositionally biased stretch (basic and acidic residues) spans 682-692 (DRPDTNVPGDH). The span at 730 to 739 (GETTVPQGTP) shows a compositional bias: polar residues. Residues 764–774 (DRPDTNVPGDH) show a composition bias toward basic and acidic residues. Polar residues predominate over residues 812 to 821 (GETTVPQGTP). The segment covering 846 to 856 (DRPDTNVPGDH) has biased composition (basic and acidic residues). The segment covering 894–903 (GETTVPQGTP) has biased composition (polar residues). Residues 987–991 (LPATG) carry the LPXTG sorting signal motif. Thr990 is modified (pentaglycyl murein peptidoglycan amidated threonine). The propeptide at 991–1020 (GENATPFFNVAALTIISSVGLLSVSKKKED) is removed by sortase.

The protein resides in the secreted. Its subcellular location is the cell wall. May play a role in both virulence and immunity. The sequence is that of C protein alpha-antigen (bca) from Streptococcus agalactiae serotype Ia (strain ATCC 27591 / A909 / CDC SS700).